The chain runs to 126 residues: Large ribosomal subunit protein uL22 (126 aa).

It belongs to the universal ribosomal protein uL22 family. In terms of assembly, part of the 50S ribosomal subunit.

This protein binds specifically to 23S rRNA; its binding is stimulated by other ribosomal proteins, e.g. L4, L17, and L20. It is important during the early stages of 50S assembly. It makes multiple contacts with different domains of the 23S rRNA in the assembled 50S subunit and ribosome. Functionally, the globular domain of the protein is located near the polypeptide exit tunnel on the outside of the subunit, while an extended beta-hairpin is found that lines the wall of the exit tunnel in the center of the 70S ribosome. The protein is Large ribosomal subunit protein uL22 of Rhodospirillum rubrum (strain ATCC 11170 / ATH 1.1.1 / DSM 467 / LMG 4362 / NCIMB 8255 / S1).